The sequence spans 120 residues: Transcription elongation factor 1 homolog (120 aa).

C25, C28, C49, and C52 together coordinate Zn(2+). The segment covering 84-110 (EDDVVQEEEEEVEEEEEEEEEEDDEDD) has biased composition (acidic residues). The interval 84 to 120 (EDDVVQEEEEEVEEEEEEEEEEDDEDDHVSVKRKYNF) is disordered.

This sequence belongs to the ELOF1 family.

The protein resides in the nucleus. Transcription elongation factor implicated in the maintenance of proper chromatin structure in actively transcribed regions. The protein is Transcription elongation factor 1 homolog of Arabidopsis thaliana (Mouse-ear cress).